We begin with the raw amino-acid sequence, 397 residues long: Phosphoglycerate kinase (397 aa).

Substrate is bound by residues 21-23 (DFN), Arg37, 60-63 (HLGR), Arg120, and Arg153. ATP contacts are provided by residues Lys206, Gly296, Glu327, and 353–356 (GGDS).

Belongs to the phosphoglycerate kinase family. As to quaternary structure, monomer.

It is found in the cytoplasm. The catalysed reaction is (2R)-3-phosphoglycerate + ATP = (2R)-3-phospho-glyceroyl phosphate + ADP. It functions in the pathway carbohydrate degradation; glycolysis; pyruvate from D-glyceraldehyde 3-phosphate: step 2/5. This is Phosphoglycerate kinase from Rhodopirellula baltica (strain DSM 10527 / NCIMB 13988 / SH1).